The following is a 397-amino-acid chain: Geranylgeranyl pyrophosphate synthase AN1592 (397 aa).

A disordered region spans residues 1 to 67 (MSPPLDSALE…SHDSSASSNI (67 aa)). Over residues 13-42 (SEYKETAFPRTEKDPSQYKEHDLVTPEKEI) the composition is skewed to basic and acidic residues. The span at 52 to 67 (SHSSHGSHDSSASSNI) shows a compositional bias: low complexity. Lys120, Arg123, and His152 together coordinate isopentenyl diphosphate. Positions 159 and 163 each coordinate Mg(2+). Residue Arg168 participates in dimethylallyl diphosphate binding. Arg169 serves as a coordination point for isopentenyl diphosphate. The dimethylallyl diphosphate site is built by Lys247, Thr248, and Gln281. Asp284 is a binding site for Mg(2+). Positions 288, 298, and 308 each coordinate dimethylallyl diphosphate.

It belongs to the FPP/GGPP synthase family. Mg(2+) is required as a cofactor.

It carries out the reaction isopentenyl diphosphate + dimethylallyl diphosphate = (2E)-geranyl diphosphate + diphosphate. The catalysed reaction is isopentenyl diphosphate + (2E)-geranyl diphosphate = (2E,6E)-farnesyl diphosphate + diphosphate. It catalyses the reaction isopentenyl diphosphate + (2E,6E)-farnesyl diphosphate = (2E,6E,10E)-geranylgeranyl diphosphate + diphosphate. Its pathway is secondary metabolite biosynthesis; terpenoid biosynthesis. Geranylgeranyl pyrophosphate synthase; part of the gene cluster that mediates the biosynthesis of the diterpene ent-pimara-8(14),15-diene (PD). Within the cluster, the HMG-CoA reductase AN1593 functions in the mevalonate pathway, which produces isoprenoid precursors. The geranylgeranyl pyrophosphate (GGPP) synthase AN1592 is needed in the formation of GGPP, the precursor for diterpenes. Lastly, the pimaradiene synthase pbcA performs the 2 cyclization steps that convert GGPP to ent-pimara-8(14),15-diene. The putative roles of the remaining cluster enzymes in ent-pimara-8(14),15-diene biosynthesis is unclear. The cytochrome P450 monooxygenase AN1598, the glutathione S-transferase AN1595, the oxidoreductases AN1596 and AN1597 probably function as decorative enzymes. It is possible that in biological conditions the compound is oxidized to ent-pimara-8(14),15-dien-19-oic acid, which is a bioactive diterpene compound predominant in many plant extracts. The polypeptide is Geranylgeranyl pyrophosphate synthase AN1592 (Emericella nidulans (strain FGSC A4 / ATCC 38163 / CBS 112.46 / NRRL 194 / M139) (Aspergillus nidulans)).